The primary structure comprises 98 residues: NADH-ubiquinone oxidoreductase chain 4L (98 aa).

3 consecutive transmembrane segments (helical) span residues Met-1 to Ile-21, Thr-29 to Leu-49, and Leu-59 to Val-79.

It belongs to the complex I subunit 4L family. Core subunit of respiratory chain NADH dehydrogenase (Complex I) which is composed of 45 different subunits.

It is found in the mitochondrion inner membrane. It carries out the reaction a ubiquinone + NADH + 5 H(+)(in) = a ubiquinol + NAD(+) + 4 H(+)(out). Functionally, core subunit of the mitochondrial membrane respiratory chain NADH dehydrogenase (Complex I) which catalyzes electron transfer from NADH through the respiratory chain, using ubiquinone as an electron acceptor. Part of the enzyme membrane arm which is embedded in the lipid bilayer and involved in proton translocation. This Ornithorhynchus anatinus (Duckbill platypus) protein is NADH-ubiquinone oxidoreductase chain 4L (MT-ND4L).